Here is a 984-residue protein sequence, read N- to C-terminus: MEYHWILLCVSLCFTFHPGDTKPTITPAGTYVVVSLNAPLELQCQGEKAMQWQREERPKVRGETKVDGKSTLYIPKAHPAHMGRYICLEETSQERASIYIYVKDPDNPFRKSMVSNILSREGDSASIPCLATDPSLENLQLKTCSSKALASGLHFSPSLEQGIIIHNTQKSYEGCYVCTGRLKETNVRSHDYHLTVRPVPVAPPVIMMQAPKRVILIRDESLYLTCNTTNVNGNIKLKWVAPLGSQPAKVDGSSRILTENFTQARSATLHIAAVRIQDTGRYQCEAENEKGVSTQSVWLDVFEKGFMYSNPVNNGTIQVRAGESLLLSVSIEAYPMPRSASWSFMGRGLHNTSDHVITTRSHEYTYSSELKLVRLKMSEGGVYTFQASNGDASVNHTFTIFVISKPEIVSHEGPVDGQVRCVAEGFPAPQITWYYCEQPYARCSQQVNATQEEQNVITVTLFSPLFGKTEVESRVNISRGRFSTLECVATVEGEQAFTLFSISERTISHDLFSPLLIGSVSAACILCLILIVLFYKYMQKPKYQIQWKVIEGIHGNNYVYIDPTQLPYDHQWEFPRKNLRFGKTLGSGAFGKVVEATAYGLANEDSMMTVAVKMLKSSAHSTEKEALMSELKVLIYLGNHINIVNLLGACTVGGPTLVITEYCCFGDLLNFLRRKRESFICFKLEEDCHYRNIMLQREMAGDSLNGYMTMRPSAAGKPSSSSSSEKRRSLREGSPYVEEDSESEMFDEDSLSLDTEDLLSFSYQVAKGMEFLTSKNCIHRDLAARNILLTQGRVAKICDFGLARDINTDSNYVVKGNARLPVKWMSPESIFECVYTFESDVWSYGILLWEIFSLGNSPYPGMPVDAKFYKLIKEGYRMDAPEFAPSEMYQIMRSCWDADPLNRPPFRKVVERIEQQLSDTTKHIYLNFSSRVPVMPRGREESSTHSMASQPFNSAGNNSPPSRPLLLHHEVFLEGTEPFRVQRV.

A signal peptide spans 1–21 (MEYHWILLCVSLCFTFHPGDT). Topologically, residues 22–514 (KPTITPAGTY…RTISHDLFSP (493 aa)) are extracellular. 5 Ig-like C2-type domains span residues 23 to 97 (PTIT…ERAS), 98 to 197 (IYIY…LTVR), 203 to 300 (PPVI…VWLD), 311 to 395 (PVNN…ASVN), and 398 to 498 (FTIF…QAFT). 4 disulfides stabilise this stretch: cysteine 44-cysteine 87, cysteine 129-cysteine 178, cysteine 144-cysteine 175, and cysteine 226-cysteine 284. Residues asparagine 227, asparagine 260, asparagine 314, asparagine 351, asparagine 395, asparagine 448, and asparagine 476 are each glycosylated (N-linked (GlcNAc...) asparagine). Cysteine 421 and cysteine 487 form a disulfide bridge. A helical membrane pass occupies residues 515 to 535 (LLIGSVSAACILCLILIVLFY). Topologically, residues 536–984 (KYMQKPKYQI…GTEPFRVQRV (449 aa)) are cytoplasmic. Tyrosine 558 contacts Mg(2+). Phosphotyrosine; by autocatalysis occurs at positions 558 and 560. Residues 579–926 (LRFGKTLGSG…LSDTTKHIYL (348 aa)) enclose the Protein kinase domain. ATP contacts are provided by residues 586 to 593 (GSGAFGKV), lysine 613, and 661 to 667 (EYCCFGD). Phosphotyrosine; by autocatalysis occurs at positions 690 and 707. The span at 711-723 (RPSAAGKPSSSSS) shows a compositional bias: low complexity. The interval 711–749 (RPSAAGKPSSSSSSEKRRSLREGSPYVEEDSESEMFDED) is disordered. Residues 737 to 749 (VEEDSESEMFDED) are compositionally biased toward acidic residues. Aspartate 781 serves as the catalytic Proton acceptor. Arginine 785 contacts ATP. The Mg(2+) site is built by asparagine 786 and aspartate 799. 2 positions are modified to phosphotyrosine; by autocatalysis: tyrosine 812 and tyrosine 925. A disordered region spans residues 936 to 963 (PRGREESSTHSMASQPFNSAGNNSPPSR). Over residues 944-960 (THSMASQPFNSAGNNSP) the composition is skewed to polar residues.

This sequence belongs to the protein kinase superfamily. Tyr protein kinase family. CSF-1/PDGF receptor subfamily. Ubiquitinated. Rapidly ubiquitinated after autophosphorylation induced by kitlg/scf binding, leading to internalization and degradation. Post-translationally, autophosphorylated on tyrosine residues. Phosphorylated tyrosine residues are important for interaction with specific binding partners.

The protein localises to the cell membrane. The enzyme catalyses L-tyrosyl-[protein] + ATP = O-phospho-L-tyrosyl-[protein] + ADP + H(+). Functionally, tyrosine-protein kinase that acts as a cell-surface receptor for the cytokine kitlg/scf and plays an essential role in the regulation of cell survival and proliferation, hematopoiesis, stem cell maintenance, gametogenesis, mast cell development, migration and function, and in melanogenesis. The protein is Mast/stem cell growth factor receptor Kit (kit) of Takifugu rubripes (Japanese pufferfish).